A 439-amino-acid polypeptide reads, in one-letter code: Mitochondrial distribution and morphology protein 12 (439 aa).

An SMP-LTD domain is found at 1-439 (MSIDINWEAA…VYPSFWTFLV (439 aa)). Acidic residues predominate over residues 71 to 84 (EEDEGDEDFSDDQD). Disordered regions lie at residues 71–104 (EEDEGDEDFSDDQDGAPKHPPTIATERSGAGTWQ), 182–278 (TPLA…HEKK), and 362–385 (YIPGINPIGGGASGGAASSRRRDD). A compositionally biased stretch (basic and acidic residues) spans 212 to 229 (DYPRPVHRQTDTDIDSGH). Positions 230–255 (SRPSTADTLNSINSQRISNPALSHPH) are enriched in polar residues. Basic and acidic residues predominate over residues 256 to 269 (SSNESHPDTRDHSP).

It belongs to the MDM12 family. As to quaternary structure, component of the ER-mitochondria encounter structure (ERMES) or MDM complex, composed of MMM1, MDM10, MDM12 and MDM34. An MMM1 homodimer associates with one molecule of MDM12 on each side in a pairwise head-to-tail manner, and the SMP-LTD domains of MMM1 and MDM12 generate a continuous hydrophobic tunnel for phospholipid trafficking.

The protein localises to the mitochondrion outer membrane. The protein resides in the endoplasmic reticulum membrane. Component of the ERMES/MDM complex, which serves as a molecular tether to connect the endoplasmic reticulum (ER) and mitochondria. Components of this complex are involved in the control of mitochondrial shape and protein biogenesis, and function in nonvesicular lipid trafficking between the ER and mitochondria. MDM12 is required for the interaction of the ER-resident membrane protein MMM1 and the outer mitochondrial membrane-resident beta-barrel protein MDM10. The MDM12-MMM1 subcomplex functions in the major beta-barrel assembly pathway that is responsible for biogenesis of all mitochondrial outer membrane beta-barrel proteins, and acts in a late step after the SAM complex. The MDM10-MDM12-MMM1 subcomplex further acts in the TOM40-specific pathway after the action of the MDM12-MMM1 complex. Essential for establishing and maintaining the structure of mitochondria and maintenance of mtDNA nucleoids. The sequence is that of Mitochondrial distribution and morphology protein 12 from Uncinocarpus reesii (strain UAMH 1704).